A 150-amino-acid chain; its full sequence is Ribosome maturation factor RimP (150 aa).

Belongs to the RimP family.

It is found in the cytoplasm. In terms of biological role, required for maturation of 30S ribosomal subunits. This chain is Ribosome maturation factor RimP, found in Acidithiobacillus ferrooxidans (strain ATCC 23270 / DSM 14882 / CIP 104768 / NCIMB 8455) (Ferrobacillus ferrooxidans (strain ATCC 23270)).